Reading from the N-terminus, the 314-residue chain is tRNA-cytidine(32) 2-sulfurtransferase (314 aa).

The short motif at 46–51 (SGGKDS) is the PP-loop motif element. [4Fe-4S] cluster-binding residues include C121, C124, and C212.

This sequence belongs to the TtcA family. Homodimer. Mg(2+) serves as cofactor. [4Fe-4S] cluster is required as a cofactor.

It is found in the cytoplasm. The enzyme catalyses cytidine(32) in tRNA + S-sulfanyl-L-cysteinyl-[cysteine desulfurase] + AH2 + ATP = 2-thiocytidine(32) in tRNA + L-cysteinyl-[cysteine desulfurase] + A + AMP + diphosphate + H(+). It participates in tRNA modification. Functionally, catalyzes the ATP-dependent 2-thiolation of cytidine in position 32 of tRNA, to form 2-thiocytidine (s(2)C32). The sulfur atoms are provided by the cysteine/cysteine desulfurase (IscS) system. The sequence is that of tRNA-cytidine(32) 2-sulfurtransferase from Nitrosomonas europaea (strain ATCC 19718 / CIP 103999 / KCTC 2705 / NBRC 14298).